A 29-amino-acid polypeptide reads, in one-letter code: Glucagon (29 aa).

S2 carries the post-translational modification Phosphoserine.

The protein belongs to the glucagon family.

Its subcellular location is the secreted. In terms of biological role, glucagon plays a key role in glucose metabolism and homeostasis. Regulates blood glucose by increasing gluconeogenesis and decreasing glycolysis. In Oryctolagus cuniculus (Rabbit), this protein is Glucagon (GCG).